Reading from the N-terminus, the 236-residue chain is 2-C-methyl-D-erythritol 4-phosphate cytidylyltransferase (236 aa).

This sequence belongs to the IspD/TarI cytidylyltransferase family. IspD subfamily. Homodimer.

The enzyme catalyses 2-C-methyl-D-erythritol 4-phosphate + CTP + H(+) = 4-CDP-2-C-methyl-D-erythritol + diphosphate. It functions in the pathway isoprenoid biosynthesis; isopentenyl diphosphate biosynthesis via DXP pathway; isopentenyl diphosphate from 1-deoxy-D-xylulose 5-phosphate: step 2/6. Catalyzes the formation of 4-diphosphocytidyl-2-C-methyl-D-erythritol from CTP and 2-C-methyl-D-erythritol 4-phosphate (MEP). The sequence is that of 2-C-methyl-D-erythritol 4-phosphate cytidylyltransferase from Shigella flexneri serotype 5b (strain 8401).